The primary structure comprises 311 residues: Ornithine carbamoyltransferase (311 aa).

Carbamoyl phosphate is bound by residues 52–55 (STRT), Q79, R103, and 129–132 (HPVQ). Residues N167, D226, and 230-231 (SM) each bind L-ornithine. Carbamoyl phosphate contacts are provided by residues 266-267 (CL) and R294.

Belongs to the aspartate/ornithine carbamoyltransferase superfamily. OTCase family.

It is found in the cytoplasm. The enzyme catalyses carbamoyl phosphate + L-ornithine = L-citrulline + phosphate + H(+). It functions in the pathway amino-acid biosynthesis; L-arginine biosynthesis; L-arginine from L-ornithine and carbamoyl phosphate: step 1/3. Functionally, reversibly catalyzes the transfer of the carbamoyl group from carbamoyl phosphate (CP) to the N(epsilon) atom of ornithine (ORN) to produce L-citrulline. In Sorangium cellulosum (strain So ce56) (Polyangium cellulosum (strain So ce56)), this protein is Ornithine carbamoyltransferase.